Reading from the N-terminus, the 210-residue chain is CLAVATA3/ESR (CLE)-related protein 4D (210 aa).

The N-terminal stretch at 1-21 (MAKNAMLCLLILSVVLALAFA) is a signal peptide. The segment at 21–83 (ATNKKDDEEP…SNQLPNNNWM (63 aa)) is required for secretion from the host cytoplasm to the host apoplasm. Residues N32 and N59 are each glycosylated (N-linked (GlcNAc...) asparagine). A disordered region spans residues 115 to 210 (RRKTGTHSQR…APAGPDPIHH (96 aa)). Composition is skewed to basic and acidic residues over residues 125–137 (HHEETTLEQEKRG), 144–158 (PIHHQDTTFEQEKRG), 165–179 (PIHHQDTTLEQEKRV), and 186–200 (PIHHQDTKFEQEKRG). The stretch at 127 to 135 (EETTLEQEK) is one A-1 repeat. A 4 X approximate repeat A region spans residues 129 to 198 (TTLEQEKRGA…HQDTKFEQEK (70 aa)). One copy of the CLE-1 repeat lies at 136-147 (RGAPAGPDPIHH). Positions 136–210 (RGAPAGPDPI…APAGPDPIHH (75 aa)) are 4 X approximate repeat CLE. The A-2 repeat unit spans residues 148 to 156 (QDTTFEQEK). A CLE-2 repeat occupies 157 to 168 (RGAPAGPDPIHH). An A-3 repeat occupies 169–177 (QDTTLEQEK). A CLE-3 repeat occupies 178-189 (RVAGAGPDPIHH). An A-4 repeat occupies 190-198 (QDTKFEQEK). A CLE-4 repeat occupies 199–210 (RGAPAGPDPIHH).

This sequence belongs to the CLV3/ESR signal peptide family. Highly expressed exclusively within the dorsal esophageal gland cell during syncytium formation in host plants.

The protein localises to the secreted. It is found in the host cytoplasm. It localises to the host extracellular space. The protein resides in the extracellular space. Its subcellular location is the apoplast. In terms of biological role, mimics host plant CLE extracellular signal peptides that regulate cell fate. May play a role in the differentiation or division of feeding cells (syncytia) induced in plant roots during infection. The polypeptide is CLAVATA3/ESR (CLE)-related protein 4D (CLE-4D) (Globodera rostochiensis (Golden nematode worm)).